The primary structure comprises 242 residues: MGAKQSGPAAANGRTRAYSGSDLPSSSSGGANGTAGGGGGARAAAAGRFPAQVPSAHQPSASGGAAAAAAAPAAPAAPRSRSLGGAVGSVASGARAAQSPFSIPNSSSGPYGSQDSVHSSPEDGGGGRDRPVGGSPGGPRLVIGSLPAHLSPHMFGGFKCPVCSKFVSSDEMDLHLVMCLTKPRITYNEDVLSKDAGECAICLEELQQGDTIARLPCLCIYHKGCIDEWFEVNRSCPEHPSD.

The disordered stretch occupies residues methionine 1–leucine 141. Glycine 2 carries the N-myristoyl glycine lipid modification. A phosphoserine mark is found at serine 19, serine 21, and serine 25. The segment covering serine 19 to glycine 29 has biased composition (low complexity). The segment covering glycine 30–alanine 41 has biased composition (gly residues). Residues proline 59 to alanine 97 are compositionally biased toward low complexity. A phosphoserine mark is found at serine 82, serine 89, serine 113, serine 116, and serine 135. The span at serine 99–histidine 118 shows a compositional bias: polar residues. Residue serine 145 is modified to Phosphoserine; by MTOR. A phosphoserine mark is found at serine 151 and serine 193. The RING-type; atypical zinc finger occupies cysteine 199–proline 240.

Interacts with UBE2N. Interacts with ZNRF1. Interacts (when phosphorylated) with YWHAE. Post-translationally, phosphorylated; leading to binding to YWHAE. Phosphorylated by MTOR at Ser-145 and dephosphorylated by PP6C. Ser-145 phosphorylation stimulates vesicle-to-cytosol translocation. In terms of tissue distribution, highly expressed in the brain, with higher expression during development than in adult. Expressed also in mammary glands, testis, colon and kidney.

It localises to the endosome membrane. It is found in the lysosome membrane. The protein localises to the presynaptic cell membrane. The protein resides in the cytoplasm. The enzyme catalyses S-ubiquitinyl-[E2 ubiquitin-conjugating enzyme]-L-cysteine + [acceptor protein]-L-lysine = [E2 ubiquitin-conjugating enzyme]-L-cysteine + N(6)-ubiquitinyl-[acceptor protein]-L-lysine.. The protein operates within protein modification; protein ubiquitination. Functionally, E3 ubiquitin-protein ligase that plays a role in the establishment and maintenance of neuronal transmission and plasticity. Ubiquitinates the Na(+)/K(+) ATPase alpha-1 subunit/ATP1A1 and thereby influences its endocytosis and/or degradation. Acts also as a positive regulator of mTORC1 activation by amino acids, which functions upstream of the V-ATPase and of Rag-GTPases. In turn, phosphorylation by mTOR leads to its inhibition via targeting to the cytosol allowing a self-regulating feedback mechanism. The polypeptide is E3 ubiquitin-protein ligase ZNRF2 (ZNRF2) (Homo sapiens (Human)).